The chain runs to 279 residues: Phosphonoacetaldehyde hydrolase (279 aa).

Residue Asp-20 is the Nucleophile of the active site. Mg(2+) contacts are provided by Asp-20 and Ala-22. The active-site Schiff-base intermediate with substrate is the Lys-62. Asp-196 is a Mg(2+) binding site.

Belongs to the HAD-like hydrolase superfamily. PhnX family. Homodimer. The cofactor is Mg(2+).

It catalyses the reaction phosphonoacetaldehyde + H2O = acetaldehyde + phosphate + H(+). Its function is as follows. Involved in phosphonate degradation. This Aeromonas hydrophila subsp. hydrophila (strain ATCC 7966 / DSM 30187 / BCRC 13018 / CCUG 14551 / JCM 1027 / KCTC 2358 / NCIMB 9240 / NCTC 8049) protein is Phosphonoacetaldehyde hydrolase.